The sequence spans 141 residues: Aspartate 1-decarboxylase (141 aa).

Ser-25 (schiff-base intermediate with substrate; via pyruvic acid) is an active-site residue. The residue at position 25 (Ser-25) is a Pyruvic acid (Ser). Thr-57 contributes to the substrate binding site. Tyr-58 serves as the catalytic Proton donor. 73–75 is a binding site for substrate; the sequence is GAA. The segment at 121–141 is disordered; that stretch reads ASAPVPGSRTERSPQAVVAGG.

Belongs to the PanD family. In terms of assembly, heterooctamer of four alpha and four beta subunits. Requires pyruvate as cofactor. Is synthesized initially as an inactive proenzyme, which is activated by self-cleavage at a specific serine bond to produce a beta-subunit with a hydroxyl group at its C-terminus and an alpha-subunit with a pyruvoyl group at its N-terminus.

The protein localises to the cytoplasm. It carries out the reaction L-aspartate + H(+) = beta-alanine + CO2. Its pathway is cofactor biosynthesis; (R)-pantothenate biosynthesis; beta-alanine from L-aspartate: step 1/1. Functionally, catalyzes the pyruvoyl-dependent decarboxylation of aspartate to produce beta-alanine. The polypeptide is Aspartate 1-decarboxylase (Streptomyces griseus subsp. griseus (strain JCM 4626 / CBS 651.72 / NBRC 13350 / KCC S-0626 / ISP 5235)).